The primary structure comprises 274 residues: Merozoite surface protein 2 (274 aa).

The N-terminal stretch at 1–20 is a signal peptide; sequence MKVIKTLSIINFFIFVTFNI. N-linked (GlcNAc...) asparagine glycosylation is found at Asn22 and Asn36. The interval 43–234 is disordered; the sequence is MAESKPPTGT…SDSQKECTDG (192 aa). The interval 44-200 is polymorphic region; that stretch reads AESKPPTGTG…EQTESPELQS (157 aa). 2 tandem repeats follow at residues 53–62 and 63–72. A 2 X 10 AA tandem repeats of G-A-S-G-S-A-G-S-G-[AD] region spans residues 53-72; that stretch reads GASGSAGSGAGASGSAGSGD. Positions 53–72 are enriched in gly residues; the sequence is GASGSAGSGAGASGSAGSGD. Positions 91 to 121 are enriched in low complexity; that stretch reads SSSTPATTTTTTTTTTTTTTNDAEASTSTSS. Composition is skewed to polar residues over residues 122–131, 140–167, and 174–202; these read ENPNHNNAET, QKSN…NVPP, and KSPT…QSAP. The N-linked (GlcNAc...) asparagine glycan is linked to Asn151. Asn223 carries N-linked (GlcNAc...) asparagine glycosylation. Cysteines 231 and 239 form a disulfide. An N-linked (GlcNAc...) asparagine glycan is attached at Asn248. A lipid anchor (GPI-anchor amidated asparagine) is attached at Asn248. Residues 249–274 constitute a propeptide, removed in mature form; the sequence is SSNIASINKFVVLISAKLVLSFAIFI.

It is found in the cell membrane. Its function is as follows. May play a role in the merozoite attachment to the erythrocyte. The polypeptide is Merozoite surface protein 2 (Plasmodium falciparum (isolate kf1916)).